Consider the following 376-residue polypeptide: Putative 12-oxophytodienoate reductase 2 (376 aa).

Residues 31 to 33 (PLT), Ala64, and Gln106 each bind FMN. Position 178–181 (178–181 (HGAH)) interacts with substrate. Tyr183 serves as the catalytic Proton donor. FMN contacts are provided by residues Arg230, Gly301, and 322 to 323 (GR).

The protein belongs to the NADH:flavin oxidoreductase/NADH oxidase family. The cofactor is FMN.

Putative oxophytodienoate reductase that may be involved in the biosynthesis or metabolism of oxylipin signaling molecules. The chain is Putative 12-oxophytodienoate reductase 2 (OPR2) from Oryza sativa subsp. japonica (Rice).